A 129-amino-acid chain; its full sequence is UPF0325 protein Spro_3794 (129 aa).

It belongs to the UPF0325 family.

The chain is UPF0325 protein Spro_3794 from Serratia proteamaculans (strain 568).